A 378-amino-acid chain; its full sequence is Protein RecA (378 aa).

Position 79–86 (79–86) interacts with ATP; it reads GPESSGKT.

This sequence belongs to the RecA family.

It localises to the cytoplasm. In terms of biological role, can catalyze the hydrolysis of ATP in the presence of single-stranded DNA, the ATP-dependent uptake of single-stranded DNA by duplex DNA, and the ATP-dependent hybridization of homologous single-stranded DNAs. It interacts with LexA causing its activation and leading to its autocatalytic cleavage. This Streptococcus pyogenes serotype M2 (strain MGAS10270) protein is Protein RecA.